We begin with the raw amino-acid sequence, 219 residues long: Ribose-5-phosphate isomerase A (219 aa).

Substrate is bound by residues Thr28–Thr31, Asp81–Asp84, and Lys94–Gly97. Glu103 acts as the Proton acceptor in catalysis. A substrate-binding site is contributed by Lys121.

It belongs to the ribose 5-phosphate isomerase family. As to quaternary structure, homodimer.

It catalyses the reaction aldehydo-D-ribose 5-phosphate = D-ribulose 5-phosphate. The protein operates within carbohydrate degradation; pentose phosphate pathway; D-ribose 5-phosphate from D-ribulose 5-phosphate (non-oxidative stage): step 1/1. In terms of biological role, catalyzes the reversible conversion of ribose-5-phosphate to ribulose 5-phosphate. This Shewanella sp. (strain MR-4) protein is Ribose-5-phosphate isomerase A.